The following is a 792-amino-acid chain: Phenylalanine--tRNA ligase beta subunit (792 aa).

The tRNA-binding domain occupies 39 to 147 (GEALDLIVVA…DDAPIGTPLA (109 aa)). The region spanning 400-475 (PAPASILLRR…RIRGYEHLPT (76 aa)) is the B5 domain. Mg(2+)-binding residues include D453, D459, E462, and E463. The FDX-ACB domain maps to 698–791 (SRFPFVRRDL…IQQRHDVRIR (94 aa)).

Belongs to the phenylalanyl-tRNA synthetase beta subunit family. Type 1 subfamily. As to quaternary structure, tetramer of two alpha and two beta subunits. Mg(2+) is required as a cofactor.

Its subcellular location is the cytoplasm. The enzyme catalyses tRNA(Phe) + L-phenylalanine + ATP = L-phenylalanyl-tRNA(Phe) + AMP + diphosphate + H(+). This Xylella fastidiosa (strain 9a5c) protein is Phenylalanine--tRNA ligase beta subunit (pheT).